We begin with the raw amino-acid sequence, 231 residues long: Large ribosomal subunit protein uL1 (231 aa).

It belongs to the universal ribosomal protein uL1 family. In terms of assembly, part of the 50S ribosomal subunit.

Functionally, binds directly to 23S rRNA. The L1 stalk is quite mobile in the ribosome, and is involved in E site tRNA release. Its function is as follows. Protein L1 is also a translational repressor protein, it controls the translation of the L11 operon by binding to its mRNA. This chain is Large ribosomal subunit protein uL1, found in Clostridium kluyveri (strain NBRC 12016).